A 459-amino-acid chain; its full sequence is UDP-N-acetylmuramate--L-alanine ligase (459 aa).

118–124 (GTHGKTT) lines the ATP pocket.

It belongs to the MurCDEF family.

It localises to the cytoplasm. It carries out the reaction UDP-N-acetyl-alpha-D-muramate + L-alanine + ATP = UDP-N-acetyl-alpha-D-muramoyl-L-alanine + ADP + phosphate + H(+). The protein operates within cell wall biogenesis; peptidoglycan biosynthesis. Functionally, cell wall formation. This is UDP-N-acetylmuramate--L-alanine ligase from Clostridium beijerinckii (strain ATCC 51743 / NCIMB 8052) (Clostridium acetobutylicum).